We begin with the raw amino-acid sequence, 92 residues long: Progonadoliberin-1 (92 aa).

Residues Met-1 to Gly-23 form the signal peptide. Gln-24 bears the Pyrrolidone carboxylic acid mark. Gly-33 bears the Glycine amide mark.

The protein belongs to the GnRH family. The precursor is cleaved by ACE, which removes the Gly-Lys-Arg peptide at the C-terminus, leading to mature hormone. The mature form of Gonadoliberin-1 is also cleaved and degraded by ACE.

The protein resides in the secreted. Stimulates the secretion of gonadotropins; it stimulates the secretion of both luteinizing and follicle-stimulating hormones. The protein is Progonadoliberin-1 (GNRH1) of Cavia porcellus (Guinea pig).